A 134-amino-acid polypeptide reads, in one-letter code: D-ribose pyranase (134 aa).

Residue H20 is the Proton donor of the active site. Residues D28, H101, and Y123–N125 contribute to the substrate site.

The protein belongs to the RbsD / FucU family. RbsD subfamily. In terms of assembly, homodecamer.

The protein resides in the cytoplasm. The enzyme catalyses beta-D-ribopyranose = beta-D-ribofuranose. The protein operates within carbohydrate metabolism; D-ribose degradation; D-ribose 5-phosphate from beta-D-ribopyranose: step 1/2. Its function is as follows. Catalyzes the interconversion of beta-pyran and beta-furan forms of D-ribose. In Pseudomonas syringae pv. syringae (strain B728a), this protein is D-ribose pyranase.